The primary structure comprises 94 residues: Acylphosphatase (94 aa).

Positions 6-92 (RVHVWIRGRV…EGLPTFEIRP (87 aa)) constitute an Acylphosphatase-like domain. Residues Arg-21 and Asn-39 contribute to the active site.

It belongs to the acylphosphatase family.

The enzyme catalyses an acyl phosphate + H2O = a carboxylate + phosphate + H(+). In Synechococcus sp. (strain JA-2-3B'a(2-13)) (Cyanobacteria bacterium Yellowstone B-Prime), this protein is Acylphosphatase (acyP).